The sequence spans 309 residues: Serine/threonine-protein phosphatase 4 catalytic subunit (309 aa).

Positions 52, 54, 80, and 112 each coordinate Mn(2+). Residue H113 is the Proton donor of the active site. Mn(2+)-binding residues include H162 and H236. Residue L309 is modified to Leucine methyl ester.

It belongs to the PPP phosphatase family. PP-4 (PP-X) subfamily. Catalytic subunit of the histone H2A phosphatase complex (HTP-C) containing PPH3, PSY2 and PSY4. Mn(2+) serves as cofactor.

The protein resides in the cytoplasm. It is found in the nucleus. It catalyses the reaction O-phospho-L-seryl-[protein] + H2O = L-seryl-[protein] + phosphate. The enzyme catalyses O-phospho-L-threonyl-[protein] + H2O = L-threonyl-[protein] + phosphate. Its function is as follows. Forms the histone H2A phosphatase complex in association with the regulatory subunits PSY2 and PSY4, which dephosphorylates H2AS128ph (gamma-H2A) that has been displaced from sites of DNA lesions in the double-stranded DNA break repair process. Dephosphorylation is necessary for efficient recovery from the DNA damage checkpoint. The sequence is that of Serine/threonine-protein phosphatase 4 catalytic subunit (PPH3) from Candida glabrata (strain ATCC 2001 / BCRC 20586 / JCM 3761 / NBRC 0622 / NRRL Y-65 / CBS 138) (Yeast).